The following is a 269-amino-acid chain: 5'-nucleotidase SurE (269 aa).

Positions 8, 9, 40, and 95 each coordinate a divalent metal cation.

This sequence belongs to the SurE nucleotidase family. The cofactor is a divalent metal cation.

Its subcellular location is the cytoplasm. The catalysed reaction is a ribonucleoside 5'-phosphate + H2O = a ribonucleoside + phosphate. Its function is as follows. Nucleotidase that shows phosphatase activity on nucleoside 5'-monophosphates. This is 5'-nucleotidase SurE from Nitratidesulfovibrio vulgaris (strain DSM 19637 / Miyazaki F) (Desulfovibrio vulgaris).